A 358-amino-acid chain; its full sequence is Peptide chain release factor 1 (358 aa).

Q233 carries the N5-methylglutamine modification.

This sequence belongs to the prokaryotic/mitochondrial release factor family. In terms of processing, methylated by PrmC. Methylation increases the termination efficiency of RF1.

Its subcellular location is the cytoplasm. Peptide chain release factor 1 directs the termination of translation in response to the peptide chain termination codons UAG and UAA. This is Peptide chain release factor 1 from Beijerinckia indica subsp. indica (strain ATCC 9039 / DSM 1715 / NCIMB 8712).